We begin with the raw amino-acid sequence, 73 residues long: Translation initiation factor IF-1 (73 aa).

The region spanning 1–73 (MPKKDGAIEI…SRGRIVYRYK (73 aa)) is the S1-like domain.

It belongs to the IF-1 family. As to quaternary structure, component of the 30S ribosomal translation pre-initiation complex which assembles on the 30S ribosome in the order IF-2 and IF-3, IF-1 and N-formylmethionyl-tRNA(fMet); mRNA recruitment can occur at any time during PIC assembly.

It is found in the cytoplasm. In terms of biological role, one of the essential components for the initiation of protein synthesis. Stabilizes the binding of IF-2 and IF-3 on the 30S subunit to which N-formylmethionyl-tRNA(fMet) subsequently binds. Helps modulate mRNA selection, yielding the 30S pre-initiation complex (PIC). Upon addition of the 50S ribosomal subunit IF-1, IF-2 and IF-3 are released leaving the mature 70S translation initiation complex. The sequence is that of Translation initiation factor IF-1 from Frankia alni (strain DSM 45986 / CECT 9034 / ACN14a).